A 213-amino-acid chain; its full sequence is Uridine kinase (213 aa).

An ATP-binding site is contributed by 14-21 (GASASGKS).

Belongs to the uridine kinase family.

The protein resides in the cytoplasm. It carries out the reaction uridine + ATP = UMP + ADP + H(+). It catalyses the reaction cytidine + ATP = CMP + ADP + H(+). Its pathway is pyrimidine metabolism; CTP biosynthesis via salvage pathway; CTP from cytidine: step 1/3. It functions in the pathway pyrimidine metabolism; UMP biosynthesis via salvage pathway; UMP from uridine: step 1/1. This chain is Uridine kinase, found in Vibrio cholerae serotype O1 (strain ATCC 39315 / El Tor Inaba N16961).